The sequence spans 493 residues: Transcript termination protein A18 (493 aa).

Residues 100–256 (MIESKRPLYI…NSIINIAKLS (157 aa)) enclose the Helicase ATP-binding domain. 113-120 (LACGFGKT) contributes to the ATP binding site. The DESH box signature appears at 206–209 (DESH).

Belongs to the helicase family. Poxviruses subfamily. As to quaternary structure, interacts with G2. Might be part of a transcription complex composed at least of G2, A18, and H5.

It is found in the virion. Its function is as follows. DNA helicase which seems to act as a postreplicative transcription termination factor. Involved in ATP-dependent release of nascent RNA. Forms a stable complex with single-stranded DNA, and to a lesser extent RNA. The polypeptide is Transcript termination protein A18 (Vaccinia virus (strain Tian Tan) (VACV)).